A 238-amino-acid polypeptide reads, in one-letter code: MPPRKKRRQPSQKAPLLFHQQPLEGPKHSCASTQLPITHTRQVPSKPIDHSTITSWVSPDFDTAAGSLFPAYQKHQNRARHSSRKPTTSKFPHLTFESPQSSSSETLGIPLIRECPSESEKDVSRRPLVPVLSPQSCGNMSVQALQSLPYVFIPPDIQTPESSSVKEELIPQDQKENSLLSCTLHTGTPNSPEPGPVLVKDTPEDKYGIKVTWRRRQHLLAYLRERGKLSRSQFLVKS.

A compositionally biased stretch (basic residues) spans 1–10; that stretch reads MPPRKKRRQP. Residues 1–31 form a disordered region; the sequence is MPPRKKRRQPSQKAPLLFHQQPLEGPKHSCA. Residue Ser51 is modified to Phosphoserine; by PLK1. Positions 55–61 match the RAD1-binding motif motif; it reads SWVSPDF. A disordered region spans residues 74 to 105; the sequence is KHQNRARHSSRKPTTSKFPHLTFESPQSSSSE. Residues 75–84 are compositionally biased toward basic residues; the sequence is HQNRARHSSR. The D-box signature appears at 125–132; it reads RRPLVPVL. The KEN box motif lies at 174-178; that stretch reads QKENS.

In terms of assembly, interacts (when phosphorylated by PLK1) with POLQ; promoting POLQ recruitment to DNA damage sites. Interacts with RAD1; interaction is direct and promotes association with the 9-1-1 (RAD9-RAD1-HUS1) complex. Interacts with RAD18. Interacts with TOPBP1. Interacts with UBE2N. In terms of processing, phosphorylated at Ser-51 by PLK1, promoting interaction with polymerase theta (POLQ). Ubiquitinated and degraded by the APC/C complex upon mitotic exit. In terms of tissue distribution, weakly expressed in testis, prostate, ovary, thymus and small intestine. Expressed strongly in breast cancer cells.

The protein resides in the nucleus. Its subcellular location is the chromosome. Functionally, involved in microhomology-mediated end-joining (MMEJ) DNA repair by promoting recruitment of polymerase theta (POLQ) to DNA damage sites during mitosis. MMEJ is an alternative non-homologous end-joining (NHEJ) machinery that takes place during mitosis to repair double-strand breaks in DNA that originate in S-phase. Accumulates in M-phase; following phosphorylation by PLK1, interacts with POLQ, enabling its recruitment to double-strand breaks for subsequent repair. Also involved in the DNA damage response (DDR) signaling in response to genotoxic stresses such as ionizing radiation (IR) during the S phase. Recruited to sites of DNA damage through interaction with the 9-1-1 cell-cycle checkpoint response complex and TOPBP1 in a ATR-dependent manner. Required for the progression of the G1 to S phase transition. Plays a role in the stimulation of CHEK1 phosphorylation. The protein is RAD9, HUS1, RAD1-interacting nuclear orphan protein 1 of Homo sapiens (Human).